We begin with the raw amino-acid sequence, 677 residues long: Threonine--tRNA ligase (677 aa).

One can recognise a TGS domain in the interval 1–59 (MAQATISITVNGEAKEVEATTTGVELFAEDKNIIAVKINGENRDLYTPLNDGDTVDPIA). Residues 255-561 (DHRKLGAEMD…LLEHYAGAFP (307 aa)) are catalytic. Zn(2+) contacts are provided by Cys360, His411, and His538.

Belongs to the class-II aminoacyl-tRNA synthetase family. As to quaternary structure, homodimer. It depends on Zn(2+) as a cofactor.

Its subcellular location is the cytoplasm. The enzyme catalyses tRNA(Thr) + L-threonine + ATP = L-threonyl-tRNA(Thr) + AMP + diphosphate + H(+). Functionally, catalyzes the attachment of threonine to tRNA(Thr) in a two-step reaction: L-threonine is first activated by ATP to form Thr-AMP and then transferred to the acceptor end of tRNA(Thr). Also edits incorrectly charged L-seryl-tRNA(Thr). This is Threonine--tRNA ligase from Bifidobacterium longum (strain DJO10A).